A 197-amino-acid chain; its full sequence is 7-methyl-GTP pyrophosphatase (197 aa).

Asp-72 serves as the catalytic Proton acceptor.

Belongs to the Maf family. YceF subfamily. A divalent metal cation is required as a cofactor.

It localises to the cytoplasm. The catalysed reaction is N(7)-methyl-GTP + H2O = N(7)-methyl-GMP + diphosphate + H(+). Nucleoside triphosphate pyrophosphatase that hydrolyzes 7-methyl-GTP (m(7)GTP). May have a dual role in cell division arrest and in preventing the incorporation of modified nucleotides into cellular nucleic acids. This is 7-methyl-GTP pyrophosphatase from Bordetella avium (strain 197N).